We begin with the raw amino-acid sequence, 406 residues long: Sorting nexin-6 (406 aa).

Residue Met1 is modified to N-acetylmethionine. At Met2 the chain carries N-acetylmethionine; in Sorting nexin-6, N-terminally processed. Positions 2-179 (MEGLDDGPDF…NQDLSVRGKN (178 aa)) are interaction with PIM1. In terms of domain architecture, PX spans 26–173 (LQSDAALQVD…HVFLEYNQDL (148 aa)). Residues 41-47 (SERDRVK), 100-106 (FDASREK), and 114-117 (EGSM) each bind a 1,2-diacyl-sn-glycero-3-phospho-(1D-myo-inositol-4,5-bisphosphate). A phosphoserine mark is found at Ser116 and Ser194. A membrane-binding amphipathic helix region spans residues 182–199 (EKLEDFFKNMVKSADGVI). Residues 203–406 (VKDVDDFFEH…NCLAVLNGDT (204 aa)) form the BAR domain.

It belongs to the sorting nexin family. In terms of assembly, forms heterodimers with BAR domain-containing sorting nexins SNX1 and SNX2. The heterodimers are proposed to self-assemble into helical arrays on the membrane to stabilize and expand local membrane curvature underlying endosomal tubule formation. Thought to be a component of the originally described retromer complex (also called SNX-BAR retromer) which is a pentamer containing the heterotrimeric retromer cargo-selective complex (CSC), also described as vacuolar protein sorting subcomplex (VPS), and a heterodimeric membrane-deforming subcomplex formed between SNX1 or SNX2 and SNX5 or SNX6 (also called SNX-BAR subcomplex); the respective CSC and SNX-BAR subcomplexes associate with low affinity. Interacts with SNX1, SNX2, VPS26A, VPS29, VPS35, TGFB receptors, BACE1, BRMS1, PIP5K1C. Interacts with DCTN1; the association with DCTN1 is involved in movement of retromer-c ontaining vesicles toward the TGN. Interacts with PIM1; translocating SNX6 to the nucleus. Interacts with CDKN1B and GIT1. In terms of processing, in vitro phosphorylated by PIM1; not affecting PIM1-dependent nuclear translocation.

The protein resides in the early endosome membrane. It is found in the cytoplasmic vesicle. The protein localises to the cytoplasm. Its subcellular location is the nucleus. In terms of biological role, involved in several stages of intracellular trafficking. Interacts with membranes phosphatidylinositol 3,4-bisphosphate and/or phosphatidylinositol 4,5-bisphosphate. Acts in part as component of the retromer membrane-deforming SNX-BAR subcomplex. The SNX-BAR retromer mediates retrograde transport of cargo proteins from endosomes to the trans-Golgi network (TGN) and is involved in endosome-to-plasma membrane transport for cargo protein recycling. The SNX-BAR subcomplex functions to deform the donor membrane into a tubular profile called endosome-to-TGN transport carrier (ETC). Does not have in vitro vesicle-to-membrane remodeling activity. Involved in retrograde endosome-to-TGN transport of lysosomal enzyme receptor IGF2R. May function as link between transport vesicles and dynactin. Negatively regulates retrograde transport of BACE1 from the cell surface to the trans-Golgi network. Involved in E-cadherin sorting and degradation; inhibits PIP5K1C-mediated E-cadherin degradation. In association with GIT1 involved in EGFR degradation. Promotes lysosomal degradation of CDKN1B. May contribute to transcription regulation. The sequence is that of Sorting nexin-6 (Snx6) from Mus musculus (Mouse).